The primary structure comprises 466 residues: 3-isopropylmalate dehydratase large subunit (466 aa).

Positions 347, 407, and 410 each coordinate [4Fe-4S] cluster.

Belongs to the aconitase/IPM isomerase family. LeuC type 1 subfamily. As to quaternary structure, heterodimer of LeuC and LeuD. It depends on [4Fe-4S] cluster as a cofactor.

The enzyme catalyses (2R,3S)-3-isopropylmalate = (2S)-2-isopropylmalate. It participates in amino-acid biosynthesis; L-leucine biosynthesis; L-leucine from 3-methyl-2-oxobutanoate: step 2/4. Functionally, catalyzes the isomerization between 2-isopropylmalate and 3-isopropylmalate, via the formation of 2-isopropylmaleate. This is 3-isopropylmalate dehydratase large subunit from Escherichia coli O9:H4 (strain HS).